Here is a 222-residue protein sequence, read N- to C-terminus: Eukaryotic translation initiation factor 3 subunit K (222 aa).

The PCI domain maps to 46–208; it reads YDLEANLAVL…KIKTKNITEK (163 aa).

Belongs to the eIF-3 subunit K family. As to quaternary structure, component of the eukaryotic translation initiation factor 3 (eIF-3) complex. The eIF-3 complex interacts with pix.

The protein resides in the cytoplasm. Its function is as follows. Component of the eukaryotic translation initiation factor 3 (eIF-3) complex, which is involved in protein synthesis of a specialized repertoire of mRNAs and, together with other initiation factors, stimulates binding of mRNA and methionyl-tRNAi to the 40S ribosome. The eIF-3 complex specifically targets and initiates translation of a subset of mRNAs involved in cell proliferation. The polypeptide is Eukaryotic translation initiation factor 3 subunit K (Drosophila persimilis (Fruit fly)).